A 219-amino-acid polypeptide reads, in one-letter code: MFTPYGMSTLVKLAAVSVGTLLFSILLPLQAAIPVGSAAAIFLIFSLWFFRDPNRSLPPGKGIVIAPADGTVMSIKACSHPFTGNGSSIISIFMSPLNVHVNRIPVTGTVTLLQHHPGSFSMAFDEKSGEENERMEIGIESNGMKLHFTQVAGFLARRIVCPLSLNEPVTAGKRFGMIKFGSRVDIVIPAGWLPEVKRGAKTRAGETIIARLATTAGNG.

Ser182 (schiff-base intermediate with substrate; via pyruvic acid) is an active-site residue. At Ser182 the chain carries Pyruvic acid (Ser); by autocatalysis.

Belongs to the phosphatidylserine decarboxylase family. PSD-A subfamily. As to quaternary structure, heterodimer of a large membrane-associated beta subunit and a small pyruvoyl-containing alpha subunit. The cofactor is pyruvate. Is synthesized initially as an inactive proenzyme. Formation of the active enzyme involves a self-maturation process in which the active site pyruvoyl group is generated from an internal serine residue via an autocatalytic post-translational modification. Two non-identical subunits are generated from the proenzyme in this reaction, and the pyruvate is formed at the N-terminus of the alpha chain, which is derived from the carboxyl end of the proenzyme. The post-translation cleavage follows an unusual pathway, termed non-hydrolytic serinolysis, in which the side chain hydroxyl group of the serine supplies its oxygen atom to form the C-terminus of the beta chain, while the remainder of the serine residue undergoes an oxidative deamination to produce ammonia and the pyruvoyl prosthetic group on the alpha chain.

It localises to the cell membrane. It catalyses the reaction a 1,2-diacyl-sn-glycero-3-phospho-L-serine + H(+) = a 1,2-diacyl-sn-glycero-3-phosphoethanolamine + CO2. It functions in the pathway phospholipid metabolism; phosphatidylethanolamine biosynthesis; phosphatidylethanolamine from CDP-diacylglycerol: step 2/2. Its function is as follows. Catalyzes the formation of phosphatidylethanolamine (PtdEtn) from phosphatidylserine (PtdSer). The sequence is that of Phosphatidylserine decarboxylase proenzyme from Chlorobium phaeovibrioides (strain DSM 265 / 1930) (Prosthecochloris vibrioformis (strain DSM 265)).